We begin with the raw amino-acid sequence, 170 residues long: Elicitin-like protein 1 (170 aa).

The signal sequence occupies residues 1–19 (MFSKTLVVLAAVAAVTVNG). Cystine bridges form between cysteine 25–cysteine 91, cysteine 47–cysteine 76, and cysteine 71–cysteine 118. Residues 122 to 170 (GGGSTPTTAPPTSTTPTTAPPTGTTPTTAPPAGTTPGVTPSPTTPKPAC) are disordered. Positions 126 to 162 (TPTTAPPTSTTPTTAPPTGTTPTTAPPAGTTPGVTPS) are enriched in low complexity.

The protein belongs to the elicitin family.

It localises to the secreted. In terms of biological role, induces local and distal defense responses (incompatible hypersensitive reaction) in plants from the solanaceae and cruciferae families. Elicits leaf necrosis and causes the accumulation of pathogenesis-related proteins. Might interact with the lipidic molecules of the plasma membrane. The sequence is that of Elicitin-like protein 1 (POD-1) from Pythium oligandrum (Mycoparasitic fungus).